A 292-amino-acid polypeptide reads, in one-letter code: tRNA (guanine-N(7)-)-methyltransferase (292 aa).

A disordered region spans residues 1 to 54; the sequence is MLKRDQSEMDIEAETANMGKEEKESFVHKRQKYRQEQEEKRLAAKKGVSFEQPE. The segment covering 19-42 has biased composition (basic and acidic residues); the sequence is GKEEKESFVHKRQKYRQEQEEKRL. S-adenosyl-L-methionine-binding positions include G110, 133–134, 168–169, and C188; these read EI and NA. Residue D191 is part of the active site. An S-adenosyl-L-methionine-binding site is contributed by 266-268; that stretch reads TEE.

The protein belongs to the class I-like SAM-binding methyltransferase superfamily. TrmB family. In terms of assembly, forms a complex with TRM82.

It is found in the nucleus. It catalyses the reaction guanosine(46) in tRNA + S-adenosyl-L-methionine = N(7)-methylguanosine(46) in tRNA + S-adenosyl-L-homocysteine. It participates in tRNA modification; N(7)-methylguanine-tRNA biosynthesis. Functionally, catalyzes the formation of N(7)-methylguanine at position 46 (m7G46) in tRNA. This Yarrowia lipolytica (strain CLIB 122 / E 150) (Yeast) protein is tRNA (guanine-N(7)-)-methyltransferase.